Reading from the N-terminus, the 386-residue chain is Bifunctional enzyme IspD/IspF (386 aa).

Residues 1 to 226 (MATPSPLPSF…EDFMADLLPV (226 aa)) form a 2-C-methyl-D-erythritol 4-phosphate cytidylyltransferase region. Residues 227 to 386 (RVGTGFDVHK…ATVVRKDTPA (160 aa)) are 2-C-methyl-D-erythritol 2,4-cyclodiphosphate synthase. Residues Asp-233 and His-235 each coordinate a divalent metal cation. Residues 233–235 (DVH) and 259–260 (HS) contribute to the 4-CDP-2-C-methyl-D-erythritol 2-phosphate site. His-267 is an a divalent metal cation binding site. 4-CDP-2-C-methyl-D-erythritol 2-phosphate contacts are provided by residues 281–283 (DIG), 357–360 (TTTE), Phe-364, and Arg-367.

This sequence in the N-terminal section; belongs to the IspD/TarI cytidylyltransferase family. IspD subfamily. The protein in the C-terminal section; belongs to the IspF family. Requires a divalent metal cation as cofactor.

It catalyses the reaction 2-C-methyl-D-erythritol 4-phosphate + CTP + H(+) = 4-CDP-2-C-methyl-D-erythritol + diphosphate. The catalysed reaction is 4-CDP-2-C-methyl-D-erythritol 2-phosphate = 2-C-methyl-D-erythritol 2,4-cyclic diphosphate + CMP. It functions in the pathway isoprenoid biosynthesis; isopentenyl diphosphate biosynthesis via DXP pathway; isopentenyl diphosphate from 1-deoxy-D-xylulose 5-phosphate: step 2/6. Its pathway is isoprenoid biosynthesis; isopentenyl diphosphate biosynthesis via DXP pathway; isopentenyl diphosphate from 1-deoxy-D-xylulose 5-phosphate: step 4/6. In terms of biological role, bifunctional enzyme that catalyzes the formation of 4-diphosphocytidyl-2-C-methyl-D-erythritol from CTP and 2-C-methyl-D-erythritol 4-phosphate (MEP) (IspD), and catalyzes the conversion of 4-diphosphocytidyl-2-C-methyl-D-erythritol 2-phosphate (CDP-ME2P) to 2-C-methyl-D-erythritol 2,4-cyclodiphosphate (ME-CPP) with a corresponding release of cytidine 5-monophosphate (CMP) (IspF). The protein is Bifunctional enzyme IspD/IspF of Erythrobacter litoralis (strain HTCC2594).